Consider the following 242-residue polypeptide: Enolase-phosphatase E1 (242 aa).

It belongs to the HAD-like hydrolase superfamily. MasA/MtnC family. As to quaternary structure, monomer. It depends on Mg(2+) as a cofactor.

It carries out the reaction 5-methylsulfanyl-2,3-dioxopentyl phosphate + H2O = 1,2-dihydroxy-5-(methylsulfanyl)pent-1-en-3-one + phosphate. It participates in amino-acid biosynthesis; L-methionine biosynthesis via salvage pathway; L-methionine from S-methyl-5-thio-alpha-D-ribose 1-phosphate: step 3/6. Its pathway is amino-acid biosynthesis; L-methionine biosynthesis via salvage pathway; L-methionine from S-methyl-5-thio-alpha-D-ribose 1-phosphate: step 4/6. Its function is as follows. Bifunctional enzyme that catalyzes the enolization of 2,3-diketo-5-methylthiopentyl-1-phosphate (DK-MTP-1-P) into the intermediate 2-hydroxy-3-keto-5-methylthiopentenyl-1-phosphate (HK-MTPenyl-1-P), which is then dephosphorylated to form the acireductone 1,2-dihydroxy-3-keto-5-methylthiopentene (DHK-MTPene). This Synechococcus sp. (strain WH7803) protein is Enolase-phosphatase E1.